A 201-amino-acid chain; its full sequence is Ras-related protein Rab-1C (201 aa).

A disordered region spans residues 1 to 20 (MGCSPSKEGNGSFSSTSTSF). Gly-2 is lipidated: N-myristoyl glycine. Residue Cys-3 is the site of S-palmitoyl cysteine attachment. Residues 40–48 (GDSGVGKSC), 58–65 (FTDSYIST), 88–92 (DTAGQ), 146–149 (NKCD), and 176–178 (SAK) contribute to the GTP site. Positions 62–70 (YISTIGVDF) match the Effector region motif.

The protein belongs to the small GTPase superfamily. Rab family. Post-translationally, although this sequence lacks the C-terminal cysteine motifs subject to isoprenylation in other Rab proteins, it does have N-terminal myristoylation and S-palmitoylation sequence motifs.

The protein is Ras-related protein Rab-1C (Rab1C) of Dictyostelium discoideum (Social amoeba).